The sequence spans 757 residues: Vitamin K-dependent gamma-carboxylase (757 aa).

The residue at position 2 (Ala2) is an N-acetylalanine. Topologically, residues 2-60 are cytoplasmic; that stretch reads AVHRGSALVAPASDKVQKNKSAQTSGLKQGSRMEKILGFEWTDLSSWQSVVTLLNKPTD. The chain crosses the membrane as a helical span at residues 61–81; the sequence is PANLAVFRFLFAFLMLLDIPQ. The Lumenal portion of the chain corresponds to 82–113; sequence ERGLSSLDRKYLDGLDVCRFPLLDALRPLPLD. Cys99 and Cys450 are disulfide-bonded. The helical transmembrane segment at 114–134 threads the bilayer; the sequence is WMYLVYTIMFLGALGMMLGLC. Residues 135 to 136 lie on the Cytoplasmic side of the membrane; that stretch reads YR. Residues 137–157 traverse the membrane as a helical segment; that stretch reads LSCVLFLLPYWYVFLLDKTSW. Topologically, residues 158–292 are lumenal; it reads NNHSYLYGLL…VSYFHCMNSQ (135 aa). The helical transmembrane segment at 293-313 threads the bilayer; the sequence is LFSIGMFPYVMLASSPLFCSA. At 314-361 the chain is on the cytoplasmic side; that stretch reads EWPRKLVARCPKRLQELLPTKAAPRPSASCVYKRSRGKAGPKPGLRHQ. A helical membrane pass occupies residues 362–382; sequence LGAIFTLLYLLEQLFLPYSHF. Residues 383 to 757 are Lumenal-facing; that stretch reads LTQGYNNWTN…PDSEHVHSEF (375 aa). Residues 729-757 are disordered; it reads EPVDESSASNTDSSNHPSEPDSEHVHSEF. A compositionally biased stretch (polar residues) spans 734–745; sequence SSASNTDSSNHP. Residues 746-757 show a composition bias toward basic and acidic residues; it reads SEPDSEHVHSEF.

The protein belongs to the vitamin K-dependent gamma-carboxylase family. Monomer. May interact with CALU.

The protein resides in the endoplasmic reticulum membrane. The enzyme catalyses 4-carboxy-L-glutamyl-[protein] + 2,3-epoxyphylloquinone + H2O + H(+) = phylloquinol + L-glutamyl-[protein] + CO2 + O2. Mediates the vitamin K-dependent carboxylation of glutamate residues to calcium-binding gamma-carboxyglutamate (Gla) residues with the concomitant conversion of the reduced hydroquinone form of vitamin K to vitamin K epoxide. Catalyzes gamma-carboxylation of various proteins, such as blood coagulation factors (F2, F7, F9 and F10), osteocalcin (bglap and bglap2) or matrix Gla protein (MGP). This is Vitamin K-dependent gamma-carboxylase (Ggcx) from Mus musculus (Mouse).